The sequence spans 291 residues: ATP synthase gamma chain (291 aa).

The protein belongs to the ATPase gamma chain family. In terms of assembly, F-type ATPases have 2 components, CF(1) - the catalytic core - and CF(0) - the membrane proton channel. CF(1) has five subunits: alpha(3), beta(3), gamma(1), delta(1), epsilon(1). CF(0) has three main subunits: a, b and c.

It localises to the cell inner membrane. Functionally, produces ATP from ADP in the presence of a proton gradient across the membrane. The gamma chain is believed to be important in regulating ATPase activity and the flow of protons through the CF(0) complex. The polypeptide is ATP synthase gamma chain (Burkholderia multivorans (strain ATCC 17616 / 249)).